The chain runs to 705 residues: Calpain-1 catalytic subunit (705 aa).

The Calpain catalytic domain maps to 48–347; the sequence is LFRDPQFPAG…FSRLEICNLT (300 aa). Residues Cys-108, His-265, and Asn-289 contribute to the active site. Residues 348-517 are domain III; it reads PDALTKDELS…KQSDTAELDE (170 aa). Residues 518-533 are linker; it reads EISADLADEEEITEDD. The EF-hand 1 domain maps to 530-565; that stretch reads TEDDIEDGFKNMFQQLAGEDMEISVFELKTILNRVI. Residues 534 to 704 form a domain IV region; it reads IEDGFKNMFQ…LAEWLLLTMC (171 aa). Residues Asp-549, Glu-551, Glu-556, Asp-589, Asp-591, Ser-593, Arg-595, Glu-600, Asp-619, Asp-621, Ser-623, Thr-625, and Glu-630 each contribute to the Ca(2+) site. 2 consecutive EF-hand domains span residues 606–641 and 671–705; these read NKIRSWLTIFRQYDLDKSGTMSSYEMRMALESAGFK and VKLETMFRFFHSMDRDGTGTAVMNLAEWLLLTMCG.

It belongs to the peptidase C2 family. As to quaternary structure, heterodimer of large (catalytic) and a small (regulatory) subunit. Ca(2+) is required as a cofactor. Post-translationally, the N-terminus is blocked. Ubiquitously expressed.

Its subcellular location is the cytoplasm. The protein resides in the cell membrane. It catalyses the reaction Broad endopeptidase specificity.. Its activity is regulated as follows. Activated by micromolar concentrations of calcium and inhibited by calpastatin. Functionally, calcium-regulated non-lysosomal thiol-protease which catalyze limited proteolysis of substrates involved in cytoskeletal remodeling and signal transduction. The chain is Calpain-1 catalytic subunit from Gallus gallus (Chicken).